We begin with the raw amino-acid sequence, 130 residues long: Small ribosomal subunit protein uS8A (130 aa).

It belongs to the universal ribosomal protein uS8 family. As to quaternary structure, component of the small ribosomal subunit (SSU). Mature yeast ribosomes consist of a small (40S) and a large (60S) subunit. The 40S small subunit contains 1 molecule of ribosomal RNA (18S rRNA) and at least 33 different proteins. The large 60S subunit contains 3 rRNA molecules (25S, 5.8S and 5S rRNA) and at least 46 different proteins.

Its subcellular location is the cytoplasm. It localises to the nucleus. Functionally, component of the ribosome, a large ribonucleoprotein complex responsible for the synthesis of proteins in the cell. The small ribosomal subunit (SSU) binds messenger RNAs (mRNAs) and translates the encoded message by selecting cognate aminoacyl-transfer RNA (tRNA) molecules. The large subunit (LSU) contains the ribosomal catalytic site termed the peptidyl transferase center (PTC), which catalyzes the formation of peptide bonds, thereby polymerizing the amino acids delivered by tRNAs into a polypeptide chain. The nascent polypeptides leave the ribosome through a tunnel in the LSU and interact with protein factors that function in enzymatic processing, targeting, and the membrane insertion of nascent chains at the exit of the ribosomal tunnel. The chain is Small ribosomal subunit protein uS8A (rps2201) from Schizosaccharomyces pombe (strain 972 / ATCC 24843) (Fission yeast).